Here is a 258-residue protein sequence, read N- to C-terminus: Ribosomal RNA small subunit methyltransferase A (258 aa).

6 residues coordinate S-adenosyl-L-methionine: H13, L15, G40, E62, D87, and N108.

This sequence belongs to the class I-like SAM-binding methyltransferase superfamily. rRNA adenine N(6)-methyltransferase family. RsmA subfamily.

The protein localises to the cytoplasm. It catalyses the reaction adenosine(1518)/adenosine(1519) in 16S rRNA + 4 S-adenosyl-L-methionine = N(6)-dimethyladenosine(1518)/N(6)-dimethyladenosine(1519) in 16S rRNA + 4 S-adenosyl-L-homocysteine + 4 H(+). Specifically dimethylates two adjacent adenosines (A1518 and A1519) in the loop of a conserved hairpin near the 3'-end of 16S rRNA in the 30S particle. May play a critical role in biogenesis of 30S subunits. The chain is Ribosomal RNA small subunit methyltransferase A from Sulfurihydrogenibium sp. (strain YO3AOP1).